A 151-amino-acid polypeptide reads, in one-letter code: Transcriptional regulator MraZ (151 aa).

SpoVT-AbrB domains are found at residues 5–51 (AHEL…PVAE) and 81–124 (AEIL…GREQ).

This sequence belongs to the MraZ family. In terms of assembly, forms oligomers.

It is found in the cytoplasm. Its subcellular location is the nucleoid. The sequence is that of Transcriptional regulator MraZ from Neisseria meningitidis serogroup C / serotype 2a (strain ATCC 700532 / DSM 15464 / FAM18).